Reading from the N-terminus, the 241-residue chain is 3-oxoacyl-[acyl-carrier-protein] reductase FabG (241 aa).

NADP(+) is bound by residues 13–16 (GASS), serine 38, 57–58 (EV), and asparagine 83. Serine 135 is a substrate binding site. The Proton acceptor role is filled by tyrosine 148. Residues 148-152 (YCASK) and isoleucine 181 contribute to the NADP(+) site.

Belongs to the short-chain dehydrogenases/reductases (SDR) family. In terms of assembly, homotetramer.

The enzyme catalyses a (3R)-hydroxyacyl-[ACP] + NADP(+) = a 3-oxoacyl-[ACP] + NADPH + H(+). Its pathway is lipid metabolism; fatty acid biosynthesis. In terms of biological role, catalyzes the NADPH-dependent reduction of beta-ketoacyl-ACP substrates to beta-hydroxyacyl-ACP products, the first reductive step in the elongation cycle of fatty acid biosynthesis. The protein is 3-oxoacyl-[acyl-carrier-protein] reductase FabG (fabG) of Rickettsia prowazekii (strain Madrid E).